The following is a 109-amino-acid chain: UPF0122 protein ABC2295 (109 aa).

It belongs to the UPF0122 family.

In terms of biological role, might take part in the signal recognition particle (SRP) pathway. This is inferred from the conservation of its genetic proximity to ftsY/ffh. May be a regulatory protein. The sequence is that of UPF0122 protein ABC2295 from Shouchella clausii (strain KSM-K16) (Alkalihalobacillus clausii).